Here is a 520-residue protein sequence, read N- to C-terminus: Maturase K (520 aa).

The protein belongs to the intron maturase 2 family. MatK subfamily.

The protein resides in the plastid. It is found in the chloroplast. In terms of biological role, usually encoded in the trnK tRNA gene intron. Probably assists in splicing its own and other chloroplast group II introns. This chain is Maturase K, found in Iris cristata (Dwarf crested iris).